The chain runs to 466 residues: Triplex capsid protein 1 (466 aa).

The segment at 1-29 is disordered; sequence MKTKPLPTAPMAWAESAVETTTSPRELAG.

It belongs to the herpesviridae TRX1 protein family. As to quaternary structure, interacts with TRX2, MCP and capsid vertex component 2/CVC2.

The protein localises to the virion. It is found in the host nucleus. Functionally, structural component of the T=16 icosahedral capsid. The capsid is composed of pentamers and hexamers of major capsid protein/MCP, which are linked together by heterotrimers called triplexes. These triplexes are formed by a single molecule of triplex protein 1/TRX1 and two copies of triplex protein 2/TRX2. Additionally, TRX1 is required for efficient transport of TRX2 to the nucleus, which is the site of capsid assembly. This is Triplex capsid protein 1 from Homo sapiens (Human).